A 373-amino-acid chain; its full sequence is Eukaryotic translation initiation factor 3 subunit M (373 aa).

S2 is subject to N-acetylserine. 2 positions are modified to phosphoserine: S2 and S152. Residues 180 to 338 (AASKVMVELL…RKVVVSHSTH (159 aa)) form the PCI domain. K253 is modified (N6-acetyllysine). S366 bears the Phosphoserine mark.

It belongs to the eIF-3 subunit M family. In terms of assembly, component of the eukaryotic translation initiation factor 3 (eIF-3) complex, which is composed of 13 subunits: EIF3A, EIF3B, EIF3C, EIF3D, EIF3E, EIF3F, EIF3G, EIF3H, EIF3I, EIF3J, EIF3K, EIF3L and EIF3M. The eIF-3 complex appears to include 3 stable modules: module A is composed of EIF3A, EIF3B, EIF3G and EIF3I; module B is composed of EIF3F, EIF3H, and EIF3M; and module C is composed of EIF3C, EIF3D, EIF3E, EIF3K and EIF3L. EIF3C of module C binds EIF3B of module A and EIF3H of module B, thereby linking the three modules. EIF3J is a labile subunit that binds to the eIF-3 complex via EIF3B. The eIF-3 complex interacts with RPS6KB1 under conditions of nutrient depletion. Mitogenic stimulation leads to binding and activation of a complex composed of MTOR and RPTOR, leading to phosphorylation and release of RPS6KB1 and binding of EIF4B to eIF-3.

The protein resides in the cytoplasm. Its function is as follows. Component of the eukaryotic translation initiation factor 3 (eIF-3) complex, which is required for several steps in the initiation of protein synthesis. The eIF-3 complex associates with the 40S ribosome and facilitates the recruitment of eIF-1, eIF-1A, eIF-2:GTP:methionyl-tRNAi and eIF-5 to form the 43S pre-initiation complex (43S PIC). The eIF-3 complex stimulates mRNA recruitment to the 43S PIC and scanning of the mRNA for AUG recognition. The eIF-3 complex is also required for disassembly and recycling of post-termination ribosomal complexes and subsequently prevents premature joining of the 40S and 60S ribosomal subunits prior to initiation. The eIF-3 complex specifically targets and initiates translation of a subset of mRNAs involved in cell proliferation, including cell cycling, differentiation and apoptosis, and uses different modes of RNA stem-loop binding to exert either translational activation or repression. The sequence is that of Eukaryotic translation initiation factor 3 subunit M from Bos taurus (Bovine).